The primary structure comprises 844 residues: DNA mismatch repair protein MutS (844 aa).

602-609 lines the ATP pocket; sequence GPNMSGKS.

The protein belongs to the DNA mismatch repair MutS family.

Its function is as follows. This protein is involved in the repair of mismatches in DNA. It is possible that it carries out the mismatch recognition step. This protein has a weak ATPase activity. The sequence is that of DNA mismatch repair protein MutS from Streptococcus pneumoniae (strain ATCC 700669 / Spain 23F-1).